The following is a 348-amino-acid chain: sn-glycerol-3-phosphate import ATP-binding protein UgpC (348 aa).

One can recognise an ABC transporter domain in the interval 4–235; sequence IQLSNIKKQY…PETTFVADFI (232 aa). 37-44 contacts ATP; the sequence is GPSGCGKS.

It belongs to the ABC transporter superfamily. sn-glycerol-3-phosphate importer (TC 3.A.1.1.3) family. As to quaternary structure, the complex is composed of two ATP-binding proteins (UgpC), two transmembrane proteins (UgpA and UgpE) and a solute-binding protein (UgpB).

The protein resides in the cell inner membrane. It catalyses the reaction sn-glycerol 3-phosphate(out) + ATP + H2O = sn-glycerol 3-phosphate(in) + ADP + phosphate + H(+). Its function is as follows. Part of the ABC transporter complex UgpBAEC involved in sn-glycerol-3-phosphate (G3P) import. Responsible for energy coupling to the transport system. In Bartonella quintana (strain Toulouse) (Rochalimaea quintana), this protein is sn-glycerol-3-phosphate import ATP-binding protein UgpC.